We begin with the raw amino-acid sequence, 175 residues long: MSSFLYTVTSFFILDSSKGERVIAKYYNNDFDTLQKQKAFEKKVFDKTSKVNFGGEITLLDNYLVVYKSFSNIIIYMVGDQNQNEIALLYVLNSFIDTLQNLFENSQINKKLILDGINYTLLTLDEIIDGGIIMESDSAVIADRVGIKAPDNDDLDESINKAVTSVKEQLFNFLK.

The protein belongs to the adaptor complexes small subunit family. In terms of assembly, oligomeric complex that consists of at least the alpha, beta, beta', gamma, delta, epsilon and zeta subunits.

Its subcellular location is the cytoplasm. It localises to the golgi apparatus membrane. The protein resides in the cytoplasmic vesicle. It is found in the COPI-coated vesicle membrane. In terms of biological role, the coatomer is a cytosolic protein complex that binds to dilysine motifs and reversibly associates with Golgi non-clathrin-coated vesicles, which further mediate biosynthetic protein transport from the ER, via the Golgi up to the trans Golgi network. Coatomer complex is required for budding from Golgi membranes, and is essential for the retrograde Golgi-to-ER transport of dilysine-tagged proteins. The zeta subunit may be involved in regulating the coat assembly and, hence, the rate of biosynthetic protein transport due to its association-dissociation properties with the coatomer complex. This chain is Probable coatomer subunit zeta-A (copZa), found in Dictyostelium discoideum (Social amoeba).